Consider the following 420-residue polypeptide: Gamma-glutamyl phosphate reductase (420 aa).

It belongs to the gamma-glutamyl phosphate reductase family.

Its subcellular location is the cytoplasm. The enzyme catalyses L-glutamate 5-semialdehyde + phosphate + NADP(+) = L-glutamyl 5-phosphate + NADPH + H(+). The protein operates within amino-acid biosynthesis; L-proline biosynthesis; L-glutamate 5-semialdehyde from L-glutamate: step 2/2. In terms of biological role, catalyzes the NADPH-dependent reduction of L-glutamate 5-phosphate into L-glutamate 5-semialdehyde and phosphate. The product spontaneously undergoes cyclization to form 1-pyrroline-5-carboxylate. The chain is Gamma-glutamyl phosphate reductase from Streptococcus pneumoniae (strain P1031).